The primary structure comprises 695 residues: Electrogenic aspartate/glutamate antiporter Aralar, mitochondrial (695 aa).

Residues 1–310 (MPMHIPFPFN…DYSDLSNIAP (310 aa)) form an N-terminal domain region. The Mitochondrial intermembrane portion of the chain corresponds to 2–345 (PMHIPFPFNW…FIQVLESSYR (344 aa)). 4 consecutive EF-hand domains span residues 71 to 104 (FNDESVRLLANIADTSKDGLISFSEFQAFEGLLC), 105 to 140 (TPDALYRTAFQLFDRKGNGTVSYADFADVVQKTELH), 142 to 175 (KIPFSLDGPFIKRYFGDKKQRLINYAEFTQLLHD), and 176 to 211 (FHEEHAMEAFRSKDPAGTGFISPLDFQDIIVNVKRH). Residues Asp-84, Ser-86, Asp-88, Leu-90, Glu-95, Asp-118, Asn-122, Thr-124, and Asp-129 each coordinate Ca(2+). The Ca(2+) site is built by Asp-189, Thr-193, and Asp-200. Residues 311–327 (EHYTKHMTHRLAEIKAV) are linker loop domain. A carrier domain region spans residues 336–627 (FIQVLESSYR…RLFYVDFGGT (292 aa)). Solcar repeat units follow at residues 340 to 431 (LESS…VRDK), 439 to 523 (IPTW…TKAM), and 531 to 619 (NHPL…LQRL). Residues 346–363 (FTLGSFAGAVGATVVYPI) form a helical membrane-spanning segment. At 364-405 (DLVKTRMQNQRAGSYIGEVAYRNSWDCFKKVVRHEGFMGLYR) the chain is on the mitochondrial matrix side. Residues 406 to 425 (GLLPQLMGVAPEKAIKLTVN) traverse the membrane as a helical segment. At 426–448 (DLVRDKLTDKKGNIPTWAEVLAG) the chain is on the mitochondrial intermembrane side. Residues 449 to 462 (GCAGASQVVFTNPL) form a helical membrane-spanning segment. At 463-497 (EIVKIRLQVAGEIASGSKIRAWSVVRELGLFGLYK) the chain is on the mitochondrial matrix side. A helical membrane pass occupies residues 498–517 (GARACLLRDVPFSAIYFPTY). Residues 518-536 (AHTKAMMADKDGYNHPLTL) are Mitochondrial intermembrane-facing. The helical transmembrane segment at 537 to 554 (LAAGAIAGVPAASLVTPA) threads the bilayer. The Mitochondrial matrix segment spans residues 555-593 (DVIKTRLQVVARSGQTTYTGVWDATKKIMAEEGPRAFWK). The helical transmembrane segment at 594–613 (GTAARVFRSSPQFGVTLVTY) threads the bilayer. The Mitochondrial intermembrane segment spans residues 614-695 (ELLQRLFYVD…AASPSTATGS (82 aa)). The segment at 628–695 (QPKGSEAHKI…AASPSTATGS (68 aa)) is C-terminal domain.

It belongs to the mitochondrial carrier (TC 2.A.29) family. As to quaternary structure, homodimer (via N-terminus). It depends on Ca(2+) as a cofactor. As to expression, expressed throughout the body in both males and females, including in ovaries and testes. Specifically expressed in female ovaries. In terms of tissue distribution, expressed throughout the body in both males and females but absent from ovaries and testes.

The protein localises to the mitochondrion inner membrane. It catalyses the reaction L-aspartate(in) + L-glutamate(out) + H(+)(out) = L-aspartate(out) + L-glutamate(in) + H(+)(in). The catalysed reaction is 3-sulfino-L-alanine(out) + L-glutamate(in) + H(+)(in) = 3-sulfino-L-alanine(in) + L-glutamate(out) + H(+)(out). The enzyme catalyses L-2-aminoadipate(in) + L-glutamate(out) + H(+)(out) = L-2-aminoadipate(out) + L-glutamate(in) + H(+)(in). It carries out the reaction L-glutamine(in) + L-glutamate(out) + Na(+)(out) + H(+)(out) = L-glutamine(out) + L-glutamate(in) + Na(+)(in) + H(+)(in). With respect to regulation, activated by Ca(2+). Inhibited by p-chloromercuribenzoate, pyrocarbonate, mersalyl, tannic acid and N-ethylmaleimide. Its function is as follows. Mitochondrial electrogenic aspartate/glutamate antiporter that favors efflux of aspartate and entry of glutamate and proton within the mitochondria as part of the malate-aspartate shuttle. Also mediates the exchange of L-cysteinesulfinate (3-sulfino-L-alanine) for L-glutamate. Necessary for gamma-aminobutyric acid (GABA) uptake in brain mitochondria in response to increased mitochondrial membrane polarization; does not possess detectable GABA transport activity but role may be indirect. In terms of biological role, possesses transport activity towards L-aspartate, L-glutamate and L-cysteinesulfinate (3-sulfino-L-alanine). L-glutamine transport activity is undetectable. GABA transport activity is undetectable. Functionally, possesses transport activity towards L-aspartate, L-glutamate and L-cysteinesulfinate (3-sulfino-L-alanine). Has a wider substrate specificity range that includes L-2-aminoadipate and L-glutamine. GABA transport activity is undetectable. This is Electrogenic aspartate/glutamate antiporter Aralar, mitochondrial from Drosophila melanogaster (Fruit fly).